A 609-amino-acid polypeptide reads, in one-letter code: Myoneurin (609 aa).

Positions 24 to 89 (CDCTILIGDF…IYSGNLNYDS (66 aa)) constitute a BTB domain. 2 consecutive short sequence motifs (nuclear localization signal) follow at residues 172–188 (KKSQ…RSHQ) and 257–262 (QKPAKL). 8 consecutive C2H2-type zinc fingers follow at residues 301-323 (PVCN…MRIH), 329-351 (YVCH…VRTH), 357-380 (YQCK…RMHH), 386-408 (YKCD…ARKH), 414-436 (YVCD…VRRH), 442-464 (YVCD…ARKH), 470-492 (YICG…FRSH), and 498-521 (FVCE…LKMH). A disordered region spans residues 528–553 (IEMKSAENSSSSEDSTTKSPEPESLE). A compositionally biased stretch (low complexity) spans 533-546 (AENSSSSEDSTTKS).

The protein localises to the nucleus. This Xenopus laevis (African clawed frog) protein is Myoneurin (mynn).